A 300-amino-acid polypeptide reads, in one-letter code: Telomere repeat-binding factor 1 (300 aa).

Positions 1–58 (MGAPKQKWTQEEESALKSGVIKHGPGKWRTILKDPEFSGVLYLRSNVDLKDKWRNMSV) constitute an HTH myb-type domain. Positions 28 to 57 (WRTILKDPEFSGVLYLRSNVDLKDKWRNMS) form a DNA-binding region, H-T-H motif. Disordered stretches follow at residues 93 to 119 (LQSD…RPNV) and 185 to 213 (NSTP…PSPK). Positions 117-185 (PNVRLDSLIM…KVKRKYRIPN (69 aa)) constitute an H15 domain. A coiled-coil region spans residues 241–290 (EAAAVAAQAVAEAEAAMAEAEEAAKEAEAAEAEAEAAQAFAEEASKTLKG).

It belongs to the histone H1/H5 family. SMH subfamily. In terms of assembly, forms a homodimer and heterodimers with TRB2 or TRB3. Interacts with POT1b, TRB2 and TRB3 through its H15 domain.

Its subcellular location is the nucleus. It localises to the nucleolus. The protein resides in the chromosome. In terms of biological role, binds preferentially double-stranded telomeric repeats. This chain is Telomere repeat-binding factor 1 (TRB1), found in Arabidopsis thaliana (Mouse-ear cress).